We begin with the raw amino-acid sequence, 336 residues long: USG-1 protein homolog (336 aa).

The protein belongs to the aspartate-semialdehyde dehydrogenase family.

The sequence is that of USG-1 protein homolog (usg) from Pseudomonas aeruginosa (strain ATCC 15692 / DSM 22644 / CIP 104116 / JCM 14847 / LMG 12228 / 1C / PRS 101 / PAO1).